The primary structure comprises 312 residues: Gamma-soluble NSF attachment protein (312 aa).

The interval lysine 281–cysteine 312 is disordered. The residue at position 284 (serine 284) is a Phosphoserine. Threonine 287 is modified (phosphothreonine). Positions alanine 300–cysteine 312 are enriched in acidic residues. Serine 308 is subject to Phosphoserine.

Belongs to the SNAP family. Interacts with RAB11FIP5. Interacts with VTI1A.

The protein resides in the membrane. Its subcellular location is the golgi apparatus. In terms of biological role, required for vesicular transport between the endoplasmic reticulum and the Golgi apparatus. The protein is Gamma-soluble NSF attachment protein of Homo sapiens (Human).